We begin with the raw amino-acid sequence, 363 residues long: MLNDTITHAERELYLTLLELAQQQPSAYEWLTRLPTWLNDIKDKANYAHAPAYQASVARLPNLTVNNVDLNSDVLTIEANLSESQRKQTMALLKQLMPWRKGPFQIGGQISSRQTVDTQDNSDTNAPILIDTEWHSDWKWQRVAPHLGNLKGRRVLDVGGGSGYHGWRMAGSGADTVIIIDPSCLFYHQFMAIRHFVGSADAHTYTHGTGRYRTHYIPVPLEALPEHSQLFDTVFSMGVLYHRQSPFEHLQQLKGQLVKGGELVLETLVIEGDANTVLVPHDRYAQMNNVYFLPSVAALIGWLEKAGFTEVRCVDVAVTSTEEQRKTEWMTYHSLADFLDPNDSSKTLEGYPAPLRATLIAKK.

Residues Lys-101, Trp-134, Lys-139, Gly-159, 181–183 (DPS), 221–222 (LE), Met-237, Tyr-241, and Arg-356 each bind carboxy-S-adenosyl-L-methionine.

This sequence belongs to the class I-like SAM-binding methyltransferase superfamily. CmoB family. Homotetramer.

The enzyme catalyses carboxy-S-adenosyl-L-methionine + 5-hydroxyuridine(34) in tRNA = 5-carboxymethoxyuridine(34) in tRNA + S-adenosyl-L-homocysteine + H(+). Catalyzes carboxymethyl transfer from carboxy-S-adenosyl-L-methionine (Cx-SAM) to 5-hydroxyuridine (ho5U) to form 5-carboxymethoxyuridine (cmo5U) at position 34 in tRNAs. The polypeptide is tRNA U34 carboxymethyltransferase (Psychrobacter cryohalolentis (strain ATCC BAA-1226 / DSM 17306 / VKM B-2378 / K5)).